The chain runs to 2073 residues: Putative mediator of RNA polymerase II transcription subunit 26 (2073 aa).

Disordered stretches follow at residues 22-94 (IERM…QSFQ), 115-146 (PQLQQQQQQQQQQQPSFNSNNNNNNNTNTYNF), 241-260 (QMQQQQIPHHQQNQQLQQQQ), and 287-334 (QQHQ…QNQQ). Over residues 31 to 41 (NQSVEMDSHTF) the composition is skewed to polar residues. Residues 42–78 (NNNNNNNNNNNINNNNNINNNNNNNNNNNNNNNSINN) are compositionally biased toward low complexity. Coiled coils occupy residues 166–453 (IQQQ…QQQQ) and 674–710 (LRQQQQQQQQQQQQQQQQQQQQQQQQQQQIQIQNQTI). Low complexity-rich tracts occupy residues 287–314 (QQHQQHQQHQQHQQQHQQHQQQHQQHQQ) and 322–334 (QQHQQQQQPQNQQ). Disordered regions lie at residues 796–879 (KGNN…NNDI), 908–1175 (INNN…NNNI), 1215–1260 (NTTS…TVIN), 1403–1475 (NTSS…LPPK), 1489–1539 (KLST…SLSP), 1551–1571 (AAAAKKQQTQELSDSTAKSLS), 1587–1645 (KSQT…SKGK), 1804–1836 (INNNNNTHSNSPDENNTKMINDENNDPNNTGSS), 1868–1935 (NNNN…GYNN), and 2019–2073 (FNNN…QSYS). Composition is skewed to low complexity over residues 798–870 (NNNN…NTNN) and 923–937 (SSSSNSNSSSPNIPN). Positions 938–947 (KPKKPVKSNS) are enriched in basic residues. The span at 953–963 (LLEDNDSDSSD) shows a compositional bias: acidic residues. Composition is skewed to low complexity over residues 964 to 977 (SSDSSDSSDSSDSS), 1027 to 1038 (ASTATSTTTTTT), 1047 to 1065 (PTSKIKPSSTIPSQPTSIT), 1073 to 1115 (STTS…SSSS), and 1127 to 1156 (KKPISTINNNTLNNNTNSSINKIASNSTST). Positions 1157–1166 (LGNKNLGTPS) are enriched in polar residues. Composition is skewed to low complexity over residues 1215–1258 (NTTS…TTTV) and 1403–1424 (NTSSTTSSASSSSSSSISNGNN). Over residues 1425 to 1440 (SDKKRNRDQPITDTSK) the composition is skewed to basic and acidic residues. Low complexity-rich tracts occupy residues 1444 to 1465 (SSSSSSSSSSSSSSSTNARSSS), 1490 to 1520 (LSTPSSSSSSSSSSSSSSTTTTTTSTGSTIP), 1527 to 1539 (SSSSSNNNNSLSP), and 1551 to 1560 (AAAAKKQQTQ). Over residues 1561–1571 (ELSDSTAKSLS) the composition is skewed to polar residues. Low complexity-rich tracts occupy residues 1599–1609 (SSNVSGKSDSS) and 1804–1817 (INNNNNTHSNSPDE). Residues 1884–1930 (NNMGNMNNQFNNMNNNNNNNQFNNGYNNNNNNNNNNNNNNNNNNNNM) adopt a coiled-coil conformation.

Belongs to the Mediator complex subunit 26 family. Component of the Mediator complex.

It is found in the nucleus. Component of the Mediator complex, a coactivator involved in the regulated transcription of nearly all RNA polymerase II-dependent genes. Mediator functions as a bridge to convey information from gene-specific regulatory proteins to the basal RNA polymerase II transcription machinery. Mediator is recruited to promoters by direct interactions with regulatory proteins and serves as a scaffold for the assembly of a functional preinitiation complex with RNA polymerase II and the general transcription factors. The chain is Putative mediator of RNA polymerase II transcription subunit 26 (med26) from Dictyostelium discoideum (Social amoeba).